Reading from the N-terminus, the 175-residue chain is Crossover junction endodeoxyribonuclease RuvC (175 aa).

Catalysis depends on residues Asp-8, Glu-68, and Asp-140. Residues Asp-8, Glu-68, and Asp-140 each contribute to the Mg(2+) site.

Belongs to the RuvC family. Homodimer which binds Holliday junction (HJ) DNA. The HJ becomes 2-fold symmetrical on binding to RuvC with unstacked arms; it has a different conformation from HJ DNA in complex with RuvA. In the full resolvosome a probable DNA-RuvA(4)-RuvB(12)-RuvC(2) complex forms which resolves the HJ. The cofactor is Mg(2+).

It is found in the cytoplasm. The enzyme catalyses Endonucleolytic cleavage at a junction such as a reciprocal single-stranded crossover between two homologous DNA duplexes (Holliday junction).. Functionally, the RuvA-RuvB-RuvC complex processes Holliday junction (HJ) DNA during genetic recombination and DNA repair. Endonuclease that resolves HJ intermediates. Cleaves cruciform DNA by making single-stranded nicks across the HJ at symmetrical positions within the homologous arms, yielding a 5'-phosphate and a 3'-hydroxyl group; requires a central core of homology in the junction. The consensus cleavage sequence is 5'-(A/T)TT(C/G)-3'. Cleavage occurs on the 3'-side of the TT dinucleotide at the point of strand exchange. HJ branch migration catalyzed by RuvA-RuvB allows RuvC to scan DNA until it finds its consensus sequence, where it cleaves and resolves the cruciform DNA. The polypeptide is Crossover junction endodeoxyribonuclease RuvC (Pseudomonas fluorescens (strain Pf0-1)).